The sequence spans 320 residues: Ribosomal protein L11 methyltransferase (320 aa).

S-adenosyl-L-methionine-binding residues include Thr165, Gly186, Asp208, and Asn251.

It belongs to the methyltransferase superfamily. PrmA family.

It localises to the cytoplasm. The enzyme catalyses L-lysyl-[protein] + 3 S-adenosyl-L-methionine = N(6),N(6),N(6)-trimethyl-L-lysyl-[protein] + 3 S-adenosyl-L-homocysteine + 3 H(+). Functionally, methylates ribosomal protein L11. This Limosilactobacillus fermentum (strain NBRC 3956 / LMG 18251) (Lactobacillus fermentum) protein is Ribosomal protein L11 methyltransferase.